Reading from the N-terminus, the 354-residue chain is tRNA N6-adenosine threonylcarbamoyltransferase (354 aa).

Residues His-111 and His-115 each contribute to the Fe cation site. Substrate is bound by residues 134 to 138, Asp-167, Gly-180, and Asn-279; that span reads LVSGG. Asp-319 contacts Fe cation.

This sequence belongs to the KAE1 / TsaD family. It depends on Fe(2+) as a cofactor.

It is found in the cytoplasm. It catalyses the reaction L-threonylcarbamoyladenylate + adenosine(37) in tRNA = N(6)-L-threonylcarbamoyladenosine(37) in tRNA + AMP + H(+). Functionally, required for the formation of a threonylcarbamoyl group on adenosine at position 37 (t(6)A37) in tRNAs that read codons beginning with adenine. Is involved in the transfer of the threonylcarbamoyl moiety of threonylcarbamoyl-AMP (TC-AMP) to the N6 group of A37, together with TsaE and TsaB. TsaD likely plays a direct catalytic role in this reaction. This Neisseria meningitidis serogroup C / serotype 2a (strain ATCC 700532 / DSM 15464 / FAM18) protein is tRNA N6-adenosine threonylcarbamoyltransferase.